We begin with the raw amino-acid sequence, 446 residues long: Tubulin beta-1 chain (446 aa).

Gln-11, Glu-69, Ser-138, Gly-142, Thr-143, Gly-144, Asn-204, and Asn-226 together coordinate GTP. Glu-69 serves as a coordination point for Mg(2+). Residues 422–446 (YQQYQDATADEEGEYEDEEEGDLQD) are disordered. The segment covering 429–446 (TADEEGEYEDEEEGDLQD) has biased composition (acidic residues).

It belongs to the tubulin family. Dimer of alpha and beta chains. A typical microtubule is a hollow water-filled tube with an outer diameter of 25 nm and an inner diameter of 15 nM. Alpha-beta heterodimers associate head-to-tail to form protofilaments running lengthwise along the microtubule wall with the beta-tubulin subunit facing the microtubule plus end conferring a structural polarity. Microtubules usually have 13 protofilaments but different protofilament numbers can be found in some organisms and specialized cells. Mg(2+) is required as a cofactor. In terms of tissue distribution, found in areas of rapidly dividing tissues.

It localises to the cytoplasm. Its subcellular location is the cytoskeleton. Functionally, tubulin is the major constituent of microtubules, a cylinder consisting of laterally associated linear protofilaments composed of alpha- and beta-tubulin heterodimers. Microtubules grow by the addition of GTP-tubulin dimers to the microtubule end, where a stabilizing cap forms. Below the cap, tubulin dimers are in GDP-bound state, owing to GTPase activity of alpha-tubulin. The protein is Tubulin beta-1 chain (TUBB1) of Zea mays (Maize).